The chain runs to 153 residues: Ribosome maturation factor RimP (153 aa).

Belongs to the RimP family.

The protein resides in the cytoplasm. Required for maturation of 30S ribosomal subunits. This is Ribosome maturation factor RimP from Clostridium botulinum (strain Langeland / NCTC 10281 / Type F).